Here is a 186-residue protein sequence, read N- to C-terminus: Probable RNA 2'-phosphotransferase (186 aa).

This sequence belongs to the KptA/TPT1 family.

Its function is as follows. Removes the 2'-phosphate from RNA via an intermediate in which the phosphate is ADP-ribosylated by NAD followed by a presumed transesterification to release the RNA and generate ADP-ribose 1''-2''-cyclic phosphate (APPR&gt;P). May function as an ADP-ribosylase. The protein is Probable RNA 2'-phosphotransferase of Clostridium perfringens (strain SM101 / Type A).